A 287-amino-acid chain; its full sequence is Hydroxyethylthiazole kinase (287 aa).

Methionine 50 serves as a coordination point for substrate. Residues arginine 126 and serine 185 each coordinate ATP. Glycine 212 is a binding site for substrate.

Belongs to the Thz kinase family. Requires Mg(2+) as cofactor.

The catalysed reaction is 5-(2-hydroxyethyl)-4-methylthiazole + ATP = 4-methyl-5-(2-phosphooxyethyl)-thiazole + ADP + H(+). It functions in the pathway cofactor biosynthesis; thiamine diphosphate biosynthesis; 4-methyl-5-(2-phosphoethyl)-thiazole from 5-(2-hydroxyethyl)-4-methylthiazole: step 1/1. Catalyzes the phosphorylation of the hydroxyl group of 4-methyl-5-beta-hydroxyethylthiazole (THZ). This is Hydroxyethylthiazole kinase from Methanobrevibacter smithii (strain ATCC 35061 / DSM 861 / OCM 144 / PS).